The chain runs to 497 residues: UDP-N-acetylmuramoyl-L-alanyl-D-glutamate--2,6-diaminopimelate ligase (497 aa).

Ser-32 is a UDP-N-acetyl-alpha-D-muramoyl-L-alanyl-D-glutamate binding site. 113-119 is a binding site for ATP; that stretch reads GTNGKTT. UDP-N-acetyl-alpha-D-muramoyl-L-alanyl-D-glutamate contacts are provided by residues 155–156, Ser-182, Gln-188, and Arg-190; that span reads TT. Lys-222 is modified (N6-carboxylysine). Meso-2,6-diaminopimelate-binding positions include Arg-385, 409–412, Gly-460, and Glu-464; that span reads DNPR. A Meso-diaminopimelate recognition motif motif is present at residues 409–412; that stretch reads DNPR.

It belongs to the MurCDEF family. MurE subfamily. Requires Mg(2+) as cofactor. Post-translationally, carboxylation is probably crucial for Mg(2+) binding and, consequently, for the gamma-phosphate positioning of ATP.

The protein localises to the cytoplasm. The enzyme catalyses UDP-N-acetyl-alpha-D-muramoyl-L-alanyl-D-glutamate + meso-2,6-diaminopimelate + ATP = UDP-N-acetyl-alpha-D-muramoyl-L-alanyl-gamma-D-glutamyl-meso-2,6-diaminopimelate + ADP + phosphate + H(+). The protein operates within cell wall biogenesis; peptidoglycan biosynthesis. Functionally, catalyzes the addition of meso-diaminopimelic acid to the nucleotide precursor UDP-N-acetylmuramoyl-L-alanyl-D-glutamate (UMAG) in the biosynthesis of bacterial cell-wall peptidoglycan. In Thermosynechococcus vestitus (strain NIES-2133 / IAM M-273 / BP-1), this protein is UDP-N-acetylmuramoyl-L-alanyl-D-glutamate--2,6-diaminopimelate ligase.